Consider the following 135-residue polypeptide: Large ribosomal subunit protein uL16c (135 aa).

Belongs to the universal ribosomal protein uL16 family. In terms of assembly, part of the 50S ribosomal subunit.

Its subcellular location is the plastid. It localises to the chloroplast. The sequence is that of Large ribosomal subunit protein uL16c from Gossypium hirsutum (Upland cotton).